The following is a 192-amino-acid chain: Leucine-rich repeat-containing protein 51 (192 aa).

3 LRR repeats span residues 49–71 (SLTQSLWLNNNVLNDLRDFNQVA), 80–101 (NLAWIDLSFNDLTSIDPVLTTF), and 103–124 (NLSVLYLHGNSIQRLGEVNKLA). Positions 137 to 175 (NPMEEEKGYRQYVLCTLSRITTFDFAGVTKADRTTAEVW) constitute an LRRCT domain.

It localises to the cytoplasm. This chain is Leucine-rich repeat-containing protein 51, found in Pan troglodytes (Chimpanzee).